Reading from the N-terminus, the 466-residue chain is Glutamate-1-semialdehyde 2,1-aminomutase (466 aa).

The residue at position 292 (Lys-292) is an N6-(pyridoxal phosphate)lysine.

It belongs to the class-III pyridoxal-phosphate-dependent aminotransferase family. HemL subfamily. As to quaternary structure, homodimer. Requires pyridoxal 5'-phosphate as cofactor.

It is found in the cytoplasm. It catalyses the reaction (S)-4-amino-5-oxopentanoate = 5-aminolevulinate. It functions in the pathway porphyrin-containing compound metabolism; protoporphyrin-IX biosynthesis; 5-aminolevulinate from L-glutamyl-tRNA(Glu): step 2/2. This is Glutamate-1-semialdehyde 2,1-aminomutase from Tropheryma whipplei (strain TW08/27) (Whipple's bacillus).